Here is a 462-residue protein sequence, read N- to C-terminus: Sugar transporter ERD6-like 12 (462 aa).

12 consecutive transmembrane segments (helical) span residues 25-45, 62-82, 101-121, 124-144, 151-171, 179-199, 262-282, 297-317, 326-346, 358-378, 399-419, and 424-444; these read LLIF…AAIG, LAQF…GAIF, LFCI…WLDM, FLVG…IAEI, GAFT…VYYF, TLAI…FFIP, LTIG…GISS, IGMM…LILV, LMTS…AFGV, IFCF…MGAL, VTIA…FMLV, and GTFI…WCLV.

The protein belongs to the major facilitator superfamily. Sugar transporter (TC 2.A.1.1) family.

The protein resides in the membrane. In terms of biological role, sugar transporter. The chain is Sugar transporter ERD6-like 12 (SUGTL5) from Arabidopsis thaliana (Mouse-ear cress).